The chain runs to 407 residues: Na(+)-translocating NADH-quinone reductase subunit F (407 aa).

Residues 3–23 (IILGVVMFTLIVLALTVMILF) traverse the membrane as a helical segment. A 2Fe-2S ferredoxin-type domain is found at 32 to 126 (GDITVEINED…NLKIELPEEI (95 aa)). Cys69, Cys75, Cys78, and Cys110 together coordinate [2Fe-2S] cluster. The FAD-binding FR-type domain maps to 129 to 269 (VKKWTCEVIS…SGPFGEFFAK (141 aa)).

It belongs to the NqrF family. In terms of assembly, composed of six subunits; NqrA, NqrB, NqrC, NqrD, NqrE and NqrF. [2Fe-2S] cluster serves as cofactor. The cofactor is FAD.

It localises to the cell inner membrane. It catalyses the reaction a ubiquinone + n Na(+)(in) + NADH + H(+) = a ubiquinol + n Na(+)(out) + NAD(+). NQR complex catalyzes the reduction of ubiquinone-1 to ubiquinol by two successive reactions, coupled with the transport of Na(+) ions from the cytoplasm to the periplasm. The first step is catalyzed by NqrF, which accepts electrons from NADH and reduces ubiquinone-1 to ubisemiquinone by a one-electron transfer pathway. The sequence is that of Na(+)-translocating NADH-quinone reductase subunit F from Yersinia pseudotuberculosis serotype O:1b (strain IP 31758).